The chain runs to 592 residues: MSIQENVESPQYPGDDTRPTSKRELAGWYCYGWAAEVFVVCAMGSFLPITLEQMARDRGVLLSDKTTPCSATWRPPLPPPGSDAPVYLPQVSDGGQCIIYFLGAEINTASFALYTFSLSVLVQAVIIISMSGAADHGTYRKKLLIVFAFIGSIATMLFLVVVPKVYLLGGLLAIISNTCFGASFVLLNSFLPVLVRHHPSLKESEEVASPDDNVTGPRGDPLFSSTGDIDRTNVDDSTPLLGPNREAGKTSAATITSLELRLSTRISSYGIGIGYIGAVILQVISILVVVVVRPPTFSLRLVLFLIGLWWFVFTIPASLWLRTRPGPPLLDSGGKPLHSWTGYMVYAWKSLGKTVTRARQLKDIVIFLAAWFLLSDGIATVSGTAVLFAKTQLNMKPAALGLINVIVMLAGVFGAFSWSYISNFFNLRASQTIIACIILFELIPLYGLLGFIPAVQRVGLGLHQPWEMYPLGALYGLVMGGLSSYCRSFFGQLIPPGYEAAFYALYAITDKGSSIFGPAIVGAITDRYGEIRPAFVFLAVLIFVPLPLMLLVDVDRGKRDAVALGAELDGIPQGSEYGAISDDQTTEDPIEE.

A run of 4 helical transmembrane segments spans residues 31–51 (YGWA…PITL), 108–128 (TASF…VIII), 143–163 (LLIV…VVVP), and 167–187 (LLGG…FVLL). Residue N213 is glycosylated (N-linked (GlcNAc...) asparagine). The next 8 helical transmembrane spans lie at 271-291 (IGIG…VVVV), 301-321 (LVLF…SLWL), 364-384 (IVIF…VSGT), 398-418 (AALG…AFSW), 433-453 (IIAC…GFIP), 468-490 (MYPL…RSFF), 502-524 (FYAL…VGAI), and 534-554 (AFVF…LVDV). The tract at residues 572-592 (PQGSEYGAISDDQTTEDPIEE) is disordered.

It belongs to the ATG22 family.

Its subcellular location is the vacuole membrane. Functionally, vacuolar effluxer which mediate the efflux of amino acids resulting from autophagic degradation. The release of autophagic amino acids allows the maintenance of protein synthesis and viability during nitrogen starvation. The sequence is that of Autophagy-related protein 22-1 (atg22-1) from Penicillium rubens (strain ATCC 28089 / DSM 1075 / NRRL 1951 / Wisconsin 54-1255) (Penicillium chrysogenum).